A 210-amino-acid chain; its full sequence is uncharacterized protein (210 aa).

An N-terminal signal peptide occupies residues M1–A20. The Lumenal segment spans residues I21–R175. The region spanning K32–M115 is the GOLD domain. A glycan (N-linked (GlcNAc...) asparagine) is linked at N165. Residues I176–F196 form a helical membrane-spanning segment. Topologically, residues I197 to V210 are cytoplasmic.

This sequence belongs to the EMP24/GP25L family.

The protein resides in the endoplasmic reticulum membrane. This is an uncharacterized protein from Schizosaccharomyces pombe (strain 972 / ATCC 24843) (Fission yeast).